The primary structure comprises 237 residues: Probable transcriptional regulatory protein Mfl546 (237 aa).

The segment at 1–20 (MGRAHEVRAASMAKTAAKKS) is disordered. Low complexity predominate over residues 9–20 (AASMAKTAAKKS).

It belongs to the TACO1 family.

Its subcellular location is the cytoplasm. This Mesoplasma florum (strain ATCC 33453 / NBRC 100688 / NCTC 11704 / L1) (Acholeplasma florum) protein is Probable transcriptional regulatory protein Mfl546.